The sequence spans 386 residues: 8-amino-7-oxononanoate synthase (386 aa).

Arg19 lines the substrate pocket. Residue 106 to 107 (GY) participates in pyridoxal 5'-phosphate binding. Position 131 (His131) interacts with substrate. Residues Ser177, His205, and Thr233 each coordinate pyridoxal 5'-phosphate. Residue Lys236 is modified to N6-(pyridoxal phosphate)lysine. Thr350 provides a ligand contact to substrate.

Belongs to the class-II pyridoxal-phosphate-dependent aminotransferase family. BioF subfamily. Homodimer. Pyridoxal 5'-phosphate serves as cofactor.

The enzyme catalyses 6-carboxyhexanoyl-[ACP] + L-alanine + H(+) = (8S)-8-amino-7-oxononanoate + holo-[ACP] + CO2. Its pathway is cofactor biosynthesis; biotin biosynthesis. Its function is as follows. Catalyzes the decarboxylative condensation of pimeloyl-[acyl-carrier protein] and L-alanine to produce 8-amino-7-oxononanoate (AON), [acyl-carrier protein], and carbon dioxide. In Alcanivorax borkumensis (strain ATCC 700651 / DSM 11573 / NCIMB 13689 / SK2), this protein is 8-amino-7-oxononanoate synthase.